A 185-amino-acid chain; its full sequence is Elongation factor P (185 aa).

It belongs to the elongation factor P family.

It is found in the cytoplasm. It functions in the pathway protein biosynthesis; polypeptide chain elongation. Its function is as follows. Involved in peptide bond synthesis. Stimulates efficient translation and peptide-bond synthesis on native or reconstituted 70S ribosomes in vitro. Probably functions indirectly by altering the affinity of the ribosome for aminoacyl-tRNA, thus increasing their reactivity as acceptors for peptidyl transferase. This Paraburkholderia phymatum (strain DSM 17167 / CIP 108236 / LMG 21445 / STM815) (Burkholderia phymatum) protein is Elongation factor P.